The following is a 520-amino-acid chain: Probable DNA ligase (520 aa).

ATP is bound at residue E213. The N6-AMP-lysine intermediate role is filled by K215. Residues R220, R235, E264, F300, R372, and K378 each coordinate ATP.

The protein belongs to the ATP-dependent DNA ligase family. It depends on Mg(2+) as a cofactor.

It carries out the reaction ATP + (deoxyribonucleotide)n-3'-hydroxyl + 5'-phospho-(deoxyribonucleotide)m = (deoxyribonucleotide)n+m + AMP + diphosphate.. In terms of biological role, DNA ligase that seals nicks in double-stranded DNA during DNA replication, DNA recombination and DNA repair. This is Probable DNA ligase from Mycobacterium sp. (strain JLS).